We begin with the raw amino-acid sequence, 538 residues long: MAQGQQPILVLPEGTSRYLGRDAQRMNILAGKILAETVRTTLGPKGMDKMLVDSLGDIVVTNDGVTILKEMDIEHPAAKMLVEVAKTQEDEVGDGTTTAVIIAGELLKKAENLLEMEIHPTIIAMGYRQAAEKAQEILDDIAIDASDRDTLMKVAMTAMTGKGTEKAREPLAELIVDAVKQVEEDGEVEKDHIKIEKKEGAAVDDSTLVQGVIIDKERVHPGMPKKVENAKIALLNCPIEVKETEVDAEIRITDPSQMQAFIEQEEQMIRDMVNSIVDTGANVLFCQKGIDDLAQHYLAKAGVLAVRRVKKSDMEKLSKATGANIVTNIEDLSPEDLGEAGVVSEKKISGEEMIFVEECKEPKAVTILVRGSTEHVVSEVERAIEDAIGVVAATVEDGKVVAGGGAPEIEIAKRLKDYADSISGREQLAVSAFAEALEIVPKTLAENAGLDSIDVLVDLRAAHEESTYMGIDVFDGKIVDMKEAGVIEPHRVKKQAIQSAAEAAEMILRIDDVIAASSSGSSEEGMEEMGGMGGMPPM.

Residues 518–538 (SSGSSEEGMEEMGGMGGMPPM) are disordered. The span at 528-538 (EMGGMGGMPPM) shows a compositional bias: gly residues.

The protein belongs to the TCP-1 chaperonin family. As to quaternary structure, forms a Heterooligomeric complex of two stacked eight-membered rings.

Functionally, molecular chaperone; binds unfolded polypeptides in vitro, and has a weak ATPase activity. This is Thermosome subunit beta (thsB) from Methanothermobacter thermautotrophicus (strain ATCC 29096 / DSM 1053 / JCM 10044 / NBRC 100330 / Delta H) (Methanobacterium thermoautotrophicum).